The primary structure comprises 270 residues: Tryptophan synthase alpha chain (270 aa).

Active-site proton acceptor residues include E49 and D60.

It belongs to the TrpA family. Tetramer of two alpha and two beta chains.

The enzyme catalyses (1S,2R)-1-C-(indol-3-yl)glycerol 3-phosphate + L-serine = D-glyceraldehyde 3-phosphate + L-tryptophan + H2O. Its pathway is amino-acid biosynthesis; L-tryptophan biosynthesis; L-tryptophan from chorismate: step 5/5. Functionally, the alpha subunit is responsible for the aldol cleavage of indoleglycerol phosphate to indole and glyceraldehyde 3-phosphate. This Paraburkholderia phytofirmans (strain DSM 17436 / LMG 22146 / PsJN) (Burkholderia phytofirmans) protein is Tryptophan synthase alpha chain.